We begin with the raw amino-acid sequence, 189 residues long: GTP cyclohydrolase 1 (189 aa).

Cys-79, His-82, and Cys-150 together coordinate Zn(2+).

This sequence belongs to the GTP cyclohydrolase I family. Homomer.

It catalyses the reaction GTP + H2O = 7,8-dihydroneopterin 3'-triphosphate + formate + H(+). It participates in cofactor biosynthesis; 7,8-dihydroneopterin triphosphate biosynthesis; 7,8-dihydroneopterin triphosphate from GTP: step 1/1. The protein is GTP cyclohydrolase 1 of Rickettsia rickettsii (strain Iowa).